Reading from the N-terminus, the 316-residue chain is uncharacterized protein (316 aa).

Positions Met-1–Pro-34 are disordered. The span at Asn-17 to Gly-26 shows a compositional bias: basic and acidic residues.

This is an uncharacterized protein from Lepidoptera (butterflies and moths).